The primary structure comprises 99 residues: Aspartyl/glutamyl-tRNA(Asn/Gln) amidotransferase subunit C (99 aa).

Belongs to the GatC family. As to quaternary structure, heterotrimer of A, B and C subunits.

The enzyme catalyses L-glutamyl-tRNA(Gln) + L-glutamine + ATP + H2O = L-glutaminyl-tRNA(Gln) + L-glutamate + ADP + phosphate + H(+). It carries out the reaction L-aspartyl-tRNA(Asn) + L-glutamine + ATP + H2O = L-asparaginyl-tRNA(Asn) + L-glutamate + ADP + phosphate + 2 H(+). Allows the formation of correctly charged Asn-tRNA(Asn) or Gln-tRNA(Gln) through the transamidation of misacylated Asp-tRNA(Asn) or Glu-tRNA(Gln) in organisms which lack either or both of asparaginyl-tRNA or glutaminyl-tRNA synthetases. The reaction takes place in the presence of glutamine and ATP through an activated phospho-Asp-tRNA(Asn) or phospho-Glu-tRNA(Gln). In Cupriavidus taiwanensis (strain DSM 17343 / BCRC 17206 / CCUG 44338 / CIP 107171 / LMG 19424 / R1) (Ralstonia taiwanensis (strain LMG 19424)), this protein is Aspartyl/glutamyl-tRNA(Asn/Gln) amidotransferase subunit C.